We begin with the raw amino-acid sequence, 212 residues long: EFC-associated protein OPG053 (212 aa).

Topologically, residues 1 to 175 (MAETKEFKTL…IIENRLPYYD (175 aa)) are virion surface. 3 disulfide bridges follow: Cys33–Cys55, Cys47–Cys127, and Cys107–Cys149. A helical transmembrane segment spans residues 176–196 (PWFLVGVAIILVIFTVAICSI). Topologically, residues 197–212 (RRNLALKYRYGTFLYV) are intravirion.

The protein belongs to the orthopoxvirus OPG053 family. As to quaternary structure, component of the entry fusion complex (EFC) composed of OPG053, OPG076, OPG086, OPG094, OPG095, OPG099, OPG107, OPG143, OPG104, OPG147 and OPG155. Except for OPG095 and OPG052, each of the EFC proteins is required for assembly or stability of the complex. Post-translationally, disulfid bonds are oxidized in the cytoplasm by OPG088 protein. Unglycosylated because produced in viral factories instead of the classic ER -Golgi route.

The protein resides in the virion membrane. Functionally, component of the entry fusion complex (EFC), which consists of 11 proteins. During cell infection, this complex mediates entry of the virion core into the host cytoplasm by a two-step mechanism consisting of lipid mixing of the viral and cellular membranes and subsequent pore formation. This chain is EFC-associated protein OPG053 (OPG053), found in Monkeypox virus.